The chain runs to 332 residues: Formamidase (332 aa).

One can recognise a CN hydrolase domain in the interval 14–259 (FLTALIQYPV…WEIVTAEVYP (246 aa)). Glu60 functions as the Proton acceptor in the catalytic mechanism. Lys132 acts as the Proton donor in catalysis. Cys165 (nucleophile) is an active-site residue.

The protein belongs to the carbon-nitrogen hydrolase superfamily. Aliphatic amidase family.

It carries out the reaction formamide + H2O = formate + NH4(+). Functionally, is an aliphatic amidase with a restricted substrate specificity, as it only hydrolyzes formamide. This is Formamidase from Bacillus cereus (strain ZK / E33L).